Reading from the N-terminus, the 291-residue chain is Meteorin (291 aa).

Positions 1–21 are cleaved as a signal peptide; the sequence is MLVATLLCALCCGLLAASAHA. 5 cysteine pairs are disulfide-bonded: Cys-28–Cys-49, Cys-80–Cys-116, Cys-169–Cys-240, Cys-172–Cys-264, and Cys-182–Cys-286.

This sequence belongs to the meteorin family. In terms of assembly, monomer. As to expression, highly expressed in brain. Expressed in undifferentiated neural progenitors and in astrocyte lineage, particularly in Bergmann glia, a subtype of radial glia, and a few discrete neuronal populations residing in the superior colliculus, the ocular motor nucleus, the raphe and pontine nuclei, and in various thalamic nuclei. Weakly expressed in heart, kidney, skeletal muscle, spleen, testis, gut and lung.

The protein resides in the secreted. Involved in both glial cell differentiation and axonal network formation during neurogenesis. Promotes astrocyte differentiation and transforms cerebellar astrocytes into radial glia. Also induces axonal extension in small and intermediate neurons of sensory ganglia by activating nearby satellite glia. In Mus musculus (Mouse), this protein is Meteorin (Metrn).